The sequence spans 186 residues: Large ribosomal subunit protein uL22 (186 aa).

The segment at 159–186 (KATDEEPTKKKLSKKKLQRQKEKMMRSE) is disordered. Over residues 177 to 186 (RQKEKMMRSE) the composition is skewed to basic and acidic residues.

This sequence belongs to the universal ribosomal protein uL22 family.

This Phlebotomus papatasi (Sandfly) protein is Large ribosomal subunit protein uL22 (RpL17).